A 1334-amino-acid polypeptide reads, in one-letter code: CRISPR-associated endonuclease Cas9 (1334 aa).

Aspartate 10 serves as the catalytic For RuvC-like nuclease domain. 3 residues coordinate Mn(2+): aspartate 10, glutamate 765, and glutamate 769. Positions 773–924 (TGKGKNNSRP…DKARFIHRQL (152 aa)) constitute an HNH Cas9-type domain. Histidine 843 (proton acceptor for HNH nuclease domain) is an active-site residue. Position 986 (histidine 986) interacts with Mn(2+).

Belongs to the CRISPR-associated protein Cas9 family. Subtype II-A subfamily. In terms of assembly, monomer. Binds crRNA and tracrRNA. The cofactor is Mg(2+).

CRISPR (clustered regularly interspaced short palindromic repeat) is an adaptive immune system that provides protection against mobile genetic elements (viruses, transposable elements and conjugative plasmids). CRISPR clusters contain spacers, sequences complementary to antecedent mobile elements, and target invading nucleic acids. CRISPR clusters are transcribed and processed into CRISPR RNA (crRNA). In type II CRISPR systems correct processing of pre-crRNA requires a trans-encoded small RNA (tracrRNA), endogenous ribonuclease 3 (rnc) and this protein. The tracrRNA serves as a guide for ribonuclease 3-aided processing of pre-crRNA. Subsequently Cas9/crRNA/tracrRNA endonucleolytically cleaves linear or circular dsDNA target complementary to the spacer; Cas9 is inactive in the absence of the 2 guide RNAs (gRNA). Cas9 recognizes the protospacer adjacent motif (PAM) in the CRISPR repeat sequences to help distinguish self versus nonself, as targets within the bacterial CRISPR locus do not have PAMs. PAM recognition is also required for catalytic activity. This is CRISPR-associated endonuclease Cas9 from Listeria innocua serovar 6a (strain ATCC BAA-680 / CLIP 11262).